Consider the following 141-residue polypeptide: Putative pre-16S rRNA nuclease (141 aa).

It belongs to the YqgF nuclease family.

It localises to the cytoplasm. Could be a nuclease involved in processing of the 5'-end of pre-16S rRNA. This Aliivibrio salmonicida (strain LFI1238) (Vibrio salmonicida (strain LFI1238)) protein is Putative pre-16S rRNA nuclease.